Here is a 432-residue protein sequence, read N- to C-terminus: MDHSMSKKLHDEALLHIVGGVNSPSRSNKGVGGGIPVTMERASGAYFYDVDGNKYIDYLAAFGPIITGHAHPHITEAITKAAQNGVLYGTPTKHEITFAKMLKEAIPSLEKVRFTNSGTEAVMTTIRVARAYTGRDKIIKFAGCYHGHFDLVLVEAGSGPSTLGIPDSAGVTKSTAEEVITVPFNDLDSFKEALAIWGDQVAAVLVEPIVGNFGMVAPEDGFLEAVNELAHVNGSLVIYDEVITAFRFMYGGAQNYLGVIPDLTAMGKIIGGGLPIGAYGGRIDIMEKVAPLGPAYQAGTHAGNPASILSGIACLEVLQEEGLYERFEKYGSMLKDGIEKAAAKHNIAVTVNQIVGALTVYFTEDPVTNYAEAGATNGELFGRFFKGMLEEGINLAPSKYEAWFITSAHSEADILETIQAVDTVFGKMVQDN.

Lys-268 bears the N6-(pyridoxal phosphate)lysine mark.

Belongs to the class-III pyridoxal-phosphate-dependent aminotransferase family. HemL subfamily. Homodimer. The cofactor is pyridoxal 5'-phosphate.

The protein localises to the cytoplasm. The enzyme catalyses (S)-4-amino-5-oxopentanoate = 5-aminolevulinate. The protein operates within porphyrin-containing compound metabolism; protoporphyrin-IX biosynthesis; 5-aminolevulinate from L-glutamyl-tRNA(Glu): step 2/2. The polypeptide is Glutamate-1-semialdehyde 2,1-aminomutase 2 (Listeria monocytogenes serovar 1/2a (strain ATCC BAA-679 / EGD-e)).